Here is a 98-residue protein sequence, read N- to C-terminus: La1-like protein 13 (98 aa).

The N-terminal stretch at 1–24 (MERILKPVFLAILIVLSFSSQCMG) is a signal peptide. Lys97 is modified (lysine amide).

This sequence belongs to the scorpion La1-like peptide family. Post-translationally, contains 4 disulfide bonds. In terms of tissue distribution, expressed by the venom gland.

The protein localises to the secreted. The polypeptide is La1-like protein 13 (Urodacus yaschenkoi (Inland robust scorpion)).